We begin with the raw amino-acid sequence, 387 residues long: Cyclin-B1-4 (387 aa).

Positions 1–29 are disordered; it reads MASSRVSDLPHQRGIAGEIKPKNVAGHGR.

Belongs to the cyclin family. Cyclin AB subfamily.

This is Cyclin-B1-4 (CYCB1-4) from Arabidopsis thaliana (Mouse-ear cress).